Here is a 497-residue protein sequence, read N- to C-terminus: Probable cytosol aminopeptidase (497 aa).

Positions 265 and 270 each coordinate Mn(2+). Residue Lys-277 is part of the active site. 3 residues coordinate Mn(2+): Asp-288, Asp-347, and Glu-349. Arg-351 is an active-site residue.

This sequence belongs to the peptidase M17 family. Mn(2+) is required as a cofactor.

The protein resides in the cytoplasm. The enzyme catalyses Release of an N-terminal amino acid, Xaa-|-Yaa-, in which Xaa is preferably Leu, but may be other amino acids including Pro although not Arg or Lys, and Yaa may be Pro. Amino acid amides and methyl esters are also readily hydrolyzed, but rates on arylamides are exceedingly low.. The catalysed reaction is Release of an N-terminal amino acid, preferentially leucine, but not glutamic or aspartic acids.. Functionally, presumably involved in the processing and regular turnover of intracellular proteins. Catalyzes the removal of unsubstituted N-terminal amino acids from various peptides. The chain is Probable cytosol aminopeptidase from Geobacillus thermodenitrificans (strain NG80-2).